Here is a 790-residue protein sequence, read N- to C-terminus: Cadherin-18 (790 aa).

Residues 1–24 (MKITSTSCICPVLVCLCFVQRCYG) form the signal peptide. The propeptide occupies 25 to 53 (TAHHSSIKVMRNQTKHIEGETEVHHRPKR). Asn36 is a glycosylation site (N-linked (GlcNAc...) asparagine). Cadherin domains are found at residues 54 to 159 (GWVW…APKF), 160 to 268 (TDGP…PPRF), 269 to 383 (PQKH…PPLF), 384 to 486 (SMPS…DNPP), and 487 to 608 (ELAR…FLSS). The Extracellular segment spans residues 54–608 (GWVWNQFFVL…TCHAEAFLSS (555 aa)). Asn255 is a glycosylation site (N-linked (GlcNAc...) asparagine). 2 N-linked (GlcNAc...) asparagine glycosylation sites follow: Asn455 and Asn536. A helical transmembrane segment spans residues 609–636 (AGLSTGALIAILLCVLILLAIVVLFITL). The Cytoplasmic segment spans residues 637–790 (RRSKKEPLII…YGEIESERTT (154 aa)). Position 786 is a phosphoserine (Ser786).

The protein resides in the cell membrane. Functionally, cadherins are calcium-dependent cell adhesion proteins. They preferentially interact with themselves in a homophilic manner in connecting cells; cadherins may thus contribute to the sorting of heterogeneous cell types. This is Cadherin-18 (CDH18) from Homo sapiens (Human).